The sequence spans 646 residues: Choline transporter-like protein 1 (646 aa).

Topologically, residues 1–27 are cytoplasmic; it reads MGCCGCGSEEGSVRQWKPLEQRSCTDV. A helical membrane pass occupies residues 28–48; the sequence is LWLLIFVLFCIGMAIICGFAI. Topologically, residues 49 to 207 are extracellular; sequence ASGAAQRLVF…RVITGVMTSK (159 aa). N-linked (GlcNAc...) asparagine glycosylation is present at Asn-133. A helical membrane pass occupies residues 208 to 228; that stretch reads EIIVGLCLMSLVLSILLMVII. At 229–233 the chain is on the cytoplasmic side; that stretch reads RYISK. The chain crosses the membrane as a helical span at residues 234–254; sequence VLVWILAILTIIGSIGGTAVL. Topologically, residues 255 to 281 are extracellular; it reads WWLYADHKKTLKLDPSQGDVAADNVTA. Asn-278 carries N-linked (GlcNAc...) asparagine glycosylation. A helical membrane pass occupies residues 282–302; the sequence is LLVCAIIATVITVILLLLMLI. Topologically, residues 303–308 are cytoplasmic; it reads MRKRVA. A helical membrane pass occupies residues 309-329; the sequence is LTIALFHVAGKVFIHIPFLIF. Residues 330–331 lie on the Extracellular side of the membrane; it reads QS. Residues 332-352 traverse the membrane as a helical segment; it reads LWTFLALAFFWIYWIAVLLLL. Residues 353–373 are Cytoplasmic-facing; sequence ATAGYPQKKDQGYVEFKVSGP. A helical membrane pass occupies residues 374–394; that stretch reads LQYTWIYHLVGLIWISEFILA. The Extracellular segment spans residues 395-435; that stretch reads CQQMTIAGAVVTYYFTRDKHNLPATPILASMCRLIKYHLGT. Residues 436–456 form a helical membrane-spanning segment; sequence VAKGSFIITLIKIPQMILVYI. At 457–530 the chain is on the cytoplasmic side; it reads HSQLKGKENA…RVAAINTVGD (74 aa). The chain crosses the membrane as a helical span at residues 531 to 551; sequence FVLFLGKLLIVLVTGFVGIIL. Over 552–559 the chain is Extracellular; that stretch reads LNYQRDYT. A helical transmembrane segment spans residues 560 to 580; it reads VWVLPLIIICLFAFFVSHCFL. Topologically, residues 581-646 are cytoplasmic; sequence SIYEMVVDVL…KSMASGSDNA (66 aa).

It belongs to the CTL (choline transporter-like) family. As to expression, present in myelinated structures from brain and spinal cord (at protein level).

It is found in the cell membrane. It localises to the mitochondrion outer membrane. The enzyme catalyses choline(out) + n H(+)(in) = choline(in) + n H(+)(out). The catalysed reaction is ethanolamine(out) + n H(+)(in) = ethanolamine(in) + n H(+)(out). Functionally, probable choline transporter. May be involved in membrane synthesis and myelin production. This Torpedo marmorata (Marbled electric ray) protein is Choline transporter-like protein 1 (slc44a1).